The sequence spans 582 residues: 5-aminolevulinate synthase, erythroid-specific, mitochondrial (582 aa).

Residues 1-44 constitute a mitochondrion transit peptide; it reads MLLQRCPVLIRSPTAILGKMIKTHQFLIGIGRCPILATQGTTCS. Arg-158 provides a ligand contact to succinyl-CoA. Pyridoxal 5'-phosphate-binding residues include Cys-253 and Phe-254. Succinyl-CoA contacts are provided by Ser-275 and Lys-294. Residues Ser-327, His-355, and Thr-383 each contribute to the pyridoxal 5'-phosphate site. Lys-386 is an active-site residue. Lys-386 is modified (N6-(pyridoxal phosphate)lysine). The pyridoxal 5'-phosphate site is built by Thr-415 and Thr-416. Thr-503 contacts succinyl-CoA.

Belongs to the class-II pyridoxal-phosphate-dependent aminotransferase family. Homodimer. Pyridoxal 5'-phosphate is required as a cofactor.

It localises to the mitochondrion inner membrane. It catalyses the reaction succinyl-CoA + glycine + H(+) = 5-aminolevulinate + CO2 + CoA. It participates in porphyrin-containing compound metabolism; protoporphyrin-IX biosynthesis; 5-aminolevulinate from glycine: step 1/1. In terms of biological role, catalyzes the pyridoxal 5'-phosphate (PLP)-dependent condensation of succinyl-CoA and glycine to form aminolevulinic acid (ALA), with CoA and CO2 as by-products. Contributes significantly to heme formation during erythropoiesis. The sequence is that of 5-aminolevulinate synthase, erythroid-specific, mitochondrial (ALAS2) from Delphinapterus leucas (Beluga whale).